Consider the following 80-residue polypeptide: Bowman-Birk type proteinase inhibitor (80 aa).

7 disulfide bridges follow: C19-C70, C20-C35, C23-C66, C25-C33, C41-C47, C44-C59, and C49-C57.

As to quaternary structure, occurs as a monomer, dimer or trimer. The dimer may be the active form. Binds calcium, probably through His-3 to His-6.

Protease inhibitor with activity against cysteine, aspartic and serine proteases. Highest activity against serine proteases, in particular trypsin and trypsin-like proteases. The protein is Bowman-Birk type proteinase inhibitor of Phaseolus acutifolius (Tepary bean).